Here is a 216-residue protein sequence, read N- to C-terminus: Somatotropin (216 aa).

The N-terminal stretch at Met1–Ala25 is a signal peptide. His45 contributes to the Zn(2+) binding site. Cys78 and Cys189 are joined by a disulfide. Glu198 is a Zn(2+) binding site. Cys206 and Cys214 are oxidised to a cystine.

Belongs to the somatotropin/prolactin family. As to expression, pituitary gland.

The protein localises to the secreted. Its function is as follows. Growth hormone plays an important role in growth control. This is Somatotropin (GH) from Meleagris gallopavo (Wild turkey).